The chain runs to 261 residues: ATP synthase subunit a (261 aa).

Positions 1–14 (MSTLSFNNISTEVL) are cleaved as a propeptide — removed in mature form. 7 consecutive transmembrane segments (helical) span residues 38 to 58 (ITNIGFYLTIGAFFFLVINLL), 96 to 116 (IYFPFIYTLFIFILINNLIGM), 126 to 146 (HFVVTFALSFTIVLGATILGF), 153 to 173 (FFSLLVPAGCPLALLPLLVLI), 191 to 211 (ANILSGHMLLHILAGFTYNIM), 214 to 234 (GIIFFFLGLIPLAFIIAFSGL), and 235 to 255 (ELGIAFIQAQVFVVLTSGYIK).

The protein belongs to the ATPase A chain family. F-type ATPases have 2 components, CF(1) - the catalytic core - and CF(0) - the membrane proton channel. CF(1) has five subunits: alpha(3), beta(3), gamma(1), delta(1), epsilon(1). CF(0) has three main subunits: a, b and c.

Its subcellular location is the mitochondrion inner membrane. In terms of biological role, mitochondrial membrane ATP synthase (F(1)F(0) ATP synthase or Complex V) produces ATP from ADP in the presence of a proton gradient across the membrane which is generated by electron transport complexes of the respiratory chain. F-type ATPases consist of two structural domains, F(1) - containing the extramembraneous catalytic core and F(0) - containing the membrane proton channel, linked together by a central stalk and a peripheral stalk. During catalysis, ATP synthesis in the catalytic domain of F(1) is coupled via a rotary mechanism of the central stalk subunits to proton translocation. Key component of the proton channel; it may play a direct role in the translocation of protons across the membrane. This chain is ATP synthase subunit a (atp-6), found in Neurospora crassa (strain ATCC 24698 / 74-OR23-1A / CBS 708.71 / DSM 1257 / FGSC 987).